The following is an 81-amino-acid chain: Styelin-E (81 aa).

The signal sequence occupies residues 1–22 (MQMKATILIVLVALFMIQQSEA). A 6'-bromotryptophan modification is found at W24. R26 bears the 3,4-dihydroxyarginine mark. 4,5-dihydroxylysine occurs at positions 27, 30, and 34. 3',4'-dihydroxyphenylalanine is present on residues Y36 and Y37. K38 carries the post-translational modification 4,5-dihydroxylysine. K40 is modified (5-hydroxylysine). Y41 and Y42 each carry 3',4'-dihydroxyphenylalanine. K44 is subject to 5-hydroxylysine. Leucine amide is present on L54. Residues 56-81 (DMTDEEFQDFMKEVEQAREEELQSRQ) constitute a propeptide, removed in mature form.

In terms of processing, contains L-DOPA (3',4'-dihydroxyphenylalanine). Hemocytes and pharyngeal tissues.

It localises to the secreted. Bactericidal against several Gram-positive and Gram-negative bacteria. The polypeptide is Styelin-E (Styela clava (Sea squirt)).